Consider the following 248-residue polypeptide: MRIQVDTHTHTYASGHAYSTIIENAFAASKLGLPMFCTTDHASSMPGAPHYWFFNNQRVLPRFIHNVAIVRGCEANICNDGEIDIPLSVDSHLDWVIASFHEPVFPSKDSLVHTQALIKVIRSNRVDALGHLGNPNFDFDFEAVIACAAEYNVAIELNNTSLKGETRIGSIDRCYEIAKVAKKLGAYVTTGSDAHFCEDIGKFSKVEQLIDDIDFPLDKVITHTPKQFLDFLALRGRAPIEEFKKLMV.

Residues histidine 8, histidine 10, histidine 16, histidine 41, glutamate 74, histidine 101, histidine 131, aspartate 193, and histidine 195 each contribute to the Zn(2+) site.

It belongs to the PHP family. It depends on Zn(2+) as a cofactor.

This Aliivibrio fischeri (strain MJ11) (Vibrio fischeri) protein is Probable phosphatase VFMJ11_A0899.